The primary structure comprises 310 residues: Alpha/beta hydrolase domain-containing protein 17A (310 aa).

The tract at residues 38-61 (VPEPEPGPGGAGAAPSGPLRTSAA) is disordered. Residues serine 190, aspartate 255, and histidine 284 each act as charge relay system in the active site. Serine 307 carries the post-translational modification Phosphoserine.

It belongs to the AB hydrolase superfamily. ABHD17 family. Palmitoylated on cysteine residues located in a cysteine cluster at the N-terminus which promotes membrane localization. Palmitoylation is required for post-synaptic localization and for depalmitoylating activity towards DLG4/PSD95. In terms of tissue distribution, expressed in brain (at protein level). Expressed in hippocampal neurons.

Its subcellular location is the cell membrane. The protein localises to the recycling endosome membrane. The protein resides in the cell projection. It localises to the dendritic spine. It is found in the postsynaptic density membrane. The enzyme catalyses S-hexadecanoyl-L-cysteinyl-[protein] + H2O = L-cysteinyl-[protein] + hexadecanoate + H(+). Functionally, hydrolyzes fatty acids from S-acylated cysteine residues in proteins. Has depalmitoylating activity towards NRAS. Has depalmitoylating activity towards DLG4/PSD95. May have depalmitoylating activity towards MAP6. The sequence is that of Alpha/beta hydrolase domain-containing protein 17A from Rattus norvegicus (Rat).